Consider the following 200-residue polypeptide: MARYTGPMWKISRRLGISLSGTGKELQKRPYPPGQHGPGQRRKLSEYGLQLQEKQKLRHMYGVNERQFRKTFEEAGKMPGKHGENFMILLESRLDNLVYRLGLARTRRQARQLVTHGHILVDGSRVNIPSYRVKPGQTIAVREKSRNLQVIKEALEANNYIPDYLTFNPEKMEGTYTRLPERSELPAEINEALIVEFYSR.

The segment at 22–42 (TGKELQKRPYPPGQHGPGQRR) is disordered. The S4 RNA-binding domain occupies 92–152 (SRLDNLVYRL…EKSRNLQVIK (61 aa)).

The protein belongs to the universal ribosomal protein uS4 family. Part of the 30S ribosomal subunit. Contacts protein S5. The interaction surface between S4 and S5 is involved in control of translational fidelity.

One of the primary rRNA binding proteins, it binds directly to 16S rRNA where it nucleates assembly of the body of the 30S subunit. Its function is as follows. With S5 and S12 plays an important role in translational accuracy. This Geobacillus kaustophilus (strain HTA426) protein is Small ribosomal subunit protein uS4.